The following is a 134-amino-acid chain: ATP synthase epsilon chain (134 aa).

Belongs to the ATPase epsilon chain family. As to quaternary structure, F-type ATPases have 2 components, CF(1) - the catalytic core - and CF(0) - the membrane proton channel. CF(1) has five subunits: alpha(3), beta(3), gamma(1), delta(1), epsilon(1). CF(0) has three main subunits: a, b and c.

It is found in the cell membrane. Functionally, produces ATP from ADP in the presence of a proton gradient across the membrane. The polypeptide is ATP synthase epsilon chain (Alkaliphilus metalliredigens (strain QYMF)).